A 100-amino-acid chain; its full sequence is MSMMCGGISAPLDADEDIQKMCDNVKPHAEEKAGKKYDVFTAKTYTTQIVSGTNYFIKIHVGGDDHVHLRVYKKLPCHGGGLELSGMQHSKSLQDPIAYF.

Residues 6 to 88 (GGISAPLDAD…GGGLELSGMQ (83 aa)) form the Cystatin domain. The Secondary area of contact signature appears at 48–52 (QIVSG).

The protein belongs to the cystatin family. In terms of tissue distribution, widely expressed. Highly expressed in liver and to a lesser extent in spleen, gill, brain, intestine, kidney, head kidney and blood. Lowest level in muscle.

The protein localises to the cytoplasm. Its function is as follows. Thiol protease inhibitor. Has papain inhibitory activity in vitro. May be involved in immune responses against invading Gram-negative bacteria. In Oplegnathus fasciatus (Barred knifejaw), this protein is Cystatin-B.